Consider the following 564-residue polypeptide: Bicarbonate transporter BicA (564 aa).

The Cytoplasmic portion of the chain corresponds to 1–11 (MQITNKIHFRN). Residues 12 to 37 (LQGDLFGGVTAAVIALPMALAFGIAS) form a helical membrane-spanning segment. Residues 38-40 (GAG) are Periplasmic-facing. Residues 41–58 (ATAGLWGAVIVGFFAALF) traverse the membrane as a helical segment. Residues 59–70 (GGTPTLISEPTG) are Cytoplasmic-facing. Position 69 (T69) interacts with hydrogencarbonate. The helical transmembrane segment at 71–86 (PMTVVQTAVIASLVAA) threads the bilayer. The Periplasmic portion of the chain corresponds to 87 to 90 (DPDN). Residues 91-112 (GLAMAFTVVMMAGLFQIAFGLL) traverse the membrane as a helical segment. Topologically, residues 113–122 (KLGKYVTMMP) are cytoplasmic. The chain crosses the membrane as a helical span at residues 123–145 (YTVISGFMSGIGIILVILQLAPF). Over 146 to 170 (LGQASPKGGVIGTLQALPNLVSNVR) the chain is Periplasmic. Residues 171 to 185 (PVETLLALMTVGIIW) form a helical membrane-spanning segment. Over 186-196 (FMPSRWKKFAP) the chain is Cytoplasmic. The chain crosses the membrane as a helical span at residues 197 to 211 (PQLVALVLGTIISIT). Topologically, residues 212–240 (LFGDLDIRRIGEIQAGLPALQLPVFQADQ) are periplasmic. A helical transmembrane segment spans residues 241–269 (LQRMLIDAAVLGMLGCIDALLTSVVADSL). Na(+) contacts are provided by D258 and T262. Over 270 to 275 (TRTEHN) the chain is Cytoplasmic. The chain crosses the membrane as a helical span at residues 276–292 (SNKELVGQGIGNVMSGL). Over 293–302 (FGGLGGAGAT) the chain is Periplasmic. G300 is a binding site for Na(+). A301 provides a ligand contact to hydrogencarbonate. T302 contacts Na(+). Residues 303-312 (MGTVVNIQSG) form a helical membrane-spanning segment. Topologically, residues 313 to 315 (GRT) are cytoplasmic. The chain crosses the membrane as a helical span at residues 316-338 (ALSGLIRAMVLLVVILGAAKLAA). The Periplasmic portion of the chain corresponds to 339–341 (TIP). The helical transmembrane segment at 342–357 (LAVLAGIAFKVGVDII) threads the bilayer. Topologically, residues 358–369 (DWGFLKRAHHVS) are cytoplasmic. Residues 370 to 390 (IKGALIMYAVIVLTVLVDLIA) traverse the membrane as a helical segment. At 391-392 (AV) the chain is on the periplasmic side. The chain crosses the membrane as a helical span at residues 393 to 405 (GIGVFIANILTID). The Cytoplasmic segment spans residues 406–564 (RMSALQSKAV…PSSSSVQTTY (159 aa)). The STAS domain maps to 432–542 (KRWLDEGNGR…DDRSEALKDA (111 aa)).

It belongs to the SLC26A/SulP transporter (TC 2.A.53) family. Forms homodimers through the STAS cytoplasmic domain.

It is found in the cell inner membrane. Its function is as follows. Low affinity, high-flux Na(+)-dependent bicarbonate transporter. Involved in carbone dioxide-concentrating mechanisms (CCMs) that accumulate CO(2) and improve photosynthetic carbon fixation. This is Bicarbonate transporter BicA from Synechocystis sp. (strain ATCC 27184 / PCC 6803 / Kazusa).